A 303-amino-acid chain; its full sequence is DnaJ homolog subfamily C member 17 (303 aa).

The J domain occupies 11 to 76; that stretch reads DLYALLGIEE…AARAAYDKVR (66 aa). Disordered regions lie at residues 104 to 123 and 150 to 170; these read ERQAQAHGSEEEEESRSATT and IRQDREQRLRGRTENTEGKGT. S112 carries the post-translational modification Phosphoserine. Residues 150 to 166 are compositionally biased toward basic and acidic residues; the sequence is IRQDREQRLRGRTENTE. The RRM domain occupies 178-249; that stretch reads KCKKEDESQG…NPLKVSWLEG (72 aa). N6-methyllysine is present on K264.

As to expression, expressed in the thyroid gland.

It is found in the cytoplasm. The protein resides in the nucleus. Its function is as follows. May negatively affect PAX8-induced thyroglobulin/TG transcription. The sequence is that of DnaJ homolog subfamily C member 17 (Dnajc17) from Mus musculus (Mouse).